We begin with the raw amino-acid sequence, 1262 residues long: Unconventional myosin-VI (1262 aa).

Residues 2 to 53 form the Myosin N-terminal SH3-like domain; it reads EDGKPVWAPHPTDGFQMGNIVDIGPDSLTIEPLNQKGKTFLALINQVFPAEE. The region spanning 57 to 771 is the Myosin motor domain; sequence KDVEDNCSLM…KFAEFDQIMK (715 aa). 151–158 contacts ATP; the sequence is GESGAGKT. Phosphoserine is present on Ser267. The tract at residues 273 to 317 is responsible for slow ATPase activity; the sequence is YLNRGCTRFFANKETDKQILQNRKSPEYVKAGSLKDPLLDDHGDF. Thr405 carries the phosphothreonine modification. At Ser604 the chain carries Phosphoserine. Actin-binding stretches follow at residues 651–673 and 665–672; these read LNLLLDKLRSTGASFIRCIKPNL and FIRCIKPN. A required for binding calmodulin region spans residues 782–810; sequence KRVNLWLVCSRWKKVQWCSLSVIKLKNKI. The region spanning 814 to 834 is the IQ domain; it reads AEACIKMQKTIRMWLCKRRHK. Positions 835 to 916 are three-helix bundle; it reads PRIDGLVKVG…EDLLSALQKK (82 aa). Residues 864–984 adopt a coiled-coil conformation; it reads KPEVNRQIKN…EDDEKRIQAE (121 aa). The interval 917–984 is SAH; it reads KQQEEEAERL…EDDEKRIQAE (68 aa). The disordered stretch occupies residues 933-955; sequence MEKERKRREEDEERRRKEEEERR. Ser1025 carries the phosphoserine modification. The interaction with TAX1BP1 and CALCOCO2/NDP52 stretch occupies residues 1034–1253; the sequence is LRRGPAVQAT…ESRQARPTYA (220 aa). The interval 1084–1086 is interaction with OPTN; it reads RRL. Residue Ser1123 is modified to Phosphoserine. Residues 1125-1253 form an interaction with TOM1 region; sequence QQNPAAQLPA…ESRQARPTYA (129 aa).

This sequence belongs to the TRAFAC class myosin-kinesin ATPase superfamily. Myosin family. In terms of assembly, homodimer; dimerization seems to implicate the unfolding of the three-helix bundle region creating an additional calmodulin binding site, and cargo binding. Able to function as a monomer under specific conditions in vitro. Forms a complex with CFTR and DAB2 in the apical membrane of epithelial cells. Component of the DISP/DOCK7-induced septin displacement complex, at least composed of DOCK7, LRCH3 and MYO6. Binding to calmodulin through a unique insert, not found in other myosins, located in the neck region between the motor domain and the IQ domain appears to contribute to the directionality reversal. This interaction occurs only if the C-terminal lobe of calmodulin is occupied by calcium. Interaction with F-actin/ACTN1 occurs only at the apical brush border domain of the proximal tubule cells. Interacts with DAB2. In vitro, the C-terminal globular tail binds a C-terminal region of DAB2. Interacts with CFTR. Interacts with CABP5. Interacts (via residues 1128-1256) with TOM1 (via residues 392-463). Interacts (via residues 1060-1285) with OPTN. Interacts (via residues 1060-1285) with TAX1BP1 and CALCOCO2/NDP52. Interacts with TOM1L2. Interacts with CLIC5; may work together in a complex which also includes RDX and MYO6 to stabilize linkages between the plasma membrane and subjacent actin cytoskeleton at the base of stereocilia. In terms of processing, phosphorylation in the motor domain, induced by EGF, results in translocation of MYO6 from the cell surface to membrane ruffles and affects F-actin dynamics. Phosphorylated in vitro by p21-activated kinase (PAK). As to expression, within the cochlea, expressed specifically within the sensory hair cells (at protein level). Expressed in the inner and outer plexiform layer of the retina (at protein level). Widely expressed. Expressed in the brain, kidney, liver, and testis.

It localises to the golgi apparatus. Its subcellular location is the trans-Golgi network membrane. The protein resides in the nucleus. The protein localises to the cytoplasm. It is found in the perinuclear region. It localises to the membrane. Its subcellular location is the clathrin-coated pit. The protein resides in the cytoplasmic vesicle. The protein localises to the clathrin-coated vesicle. It is found in the cell projection. It localises to the filopodium. Its subcellular location is the ruffle membrane. The protein resides in the microvillus. The protein localises to the cytosol. Myosins are actin-based motor molecules with ATPase activity. Unconventional myosins serve in intracellular movements. Myosin 6 is a reverse-direction motor protein that moves towards the minus-end of actin filaments. Has slow rate of actin-activated ADP release due to weak ATP binding. Functions in a variety of intracellular processes such as vesicular membrane trafficking and cell migration. Required for the structural integrity of the Golgi apparatus via the p53-dependent pro-survival pathway. Appears to be involved in a very early step of clathrin-mediated endocytosis in polarized epithelial cells. Together with TOM1, mediates delivery of endocytic cargo to autophagosomes thereby promoting autophagosome maturation and driving fusion with lysosomes. Links TOM1 with autophagy receptors, such as TAX1BP1; CALCOCO2/NDP52 and OPTN. May act as a regulator of F-actin dynamics. As part of the DISP complex, may regulate the association of septins with actin and thereby regulate the actin cytoskeleton. May play a role in transporting DAB2 from the plasma membrane to specific cellular targets. May play a role in the extension and network organization of neurites. Required for structural integrity of inner ear hair cells. Required for the correct localization of CLIC5 and RDX at the stereocilium base. Modulates RNA polymerase II-dependent transcription. The sequence is that of Unconventional myosin-VI (Myo6) from Mus musculus (Mouse).